The chain runs to 218 residues: Glutathione S-transferase (218 aa).

A GST N-terminal domain is found at 3 to 88 (SKPVLGYWDI…YIGRKYKLTG (86 aa)). Glutathione contacts are provided by residues 9–10 (YW), 43–46 (RSAW), lysine 50, 59–60 (NL), and 72–73 (QT). Residues 90 to 206 (NEPEELRVSL…YIKAQQPKLF (117 aa)) enclose the GST C-terminal domain. Tyrosine 116 contacts substrate.

Belongs to the GST superfamily. Mu family.

It carries out the reaction RX + glutathione = an S-substituted glutathione + a halide anion + H(+). In terms of biological role, conjugation of reduced glutathione to a wide number of exogenous and endogenous hydrophobic electrophiles. The chain is Glutathione S-transferase from Tyrophagus putrescentiae (Mold mite).